The following is a 399-amino-acid chain: Putative cytochrome P450 133B2 (399 aa).

Position 348 (cysteine 348) interacts with heme.

Belongs to the cytochrome P450 family. Requires heme as cofactor.

The protein is Putative cytochrome P450 133B2 (cyp133B2) of Xylella fastidiosa (strain Temecula1 / ATCC 700964).